Reading from the N-terminus, the 732-residue chain is Small conductance calcium-activated potassium channel protein 3 (732 aa).

A compositionally biased stretch (basic and acidic residues) spans 1–11 (MDTSGHFHDSG). Disordered regions lie at residues 1–82 (MDTS…QQAP) and 103–162 (HSSP…ASPL). Residues 35–59 (QPPPPSAPPAVPQQPPGPLLQPQPP) are compositionally biased toward pro residues. A compositionally biased stretch (low complexity) spans 60–82 (QLQQQQQQQQQQQQQQQQQQQAP). The segment covering 113–133 (NSANSTAILHPSSRQGSQLNL) has biased composition (polar residues). Over residues 139–148 (GHSPSSTATS) the composition is skewed to low complexity. Phosphoserine is present on serine 168. The segment covering 241-257 (THNHQHAGTTAGSTTFP) has biased composition (polar residues). The tract at residues 241–260 (THNHQHAGTTAGSTTFPKAN) is disordered. The chain crosses the membrane as a helical span at residues 289–309 (LIFGMFGIVVMVIETELSWGL). A helical membrane pass occupies residues 316-336 (FSLALKCLISLSTIILLGLII). Residues 367–387 (ISLEMLVCAIHPIPGEYKFFW) traverse the membrane as a helical segment. A helical transmembrane segment spans residues 406–426 (IILSIPMFLRLYLIARVMLLH). Residues 455–475 (LMTICPGTVLLVFSISLWIIA) form a helical membrane-spanning segment. Positions 495–515 (FLGAMWLISITFLSIGYGDMV) form an intramembrane region, pore-forming. The chain crosses the membrane as a helical span at residues 524-544 (VCLLTGIMGAGCTALVVAVVA). Positions 562–638 (DTQLTKRIKN…LVDLSKMQNV (77 aa)) are calmodulin-binding. The stretch at 643–670 (ITELNDRSEDLEKQIGSLESKLEHLTAS) forms a coiled coil. A disordered region spans residues 704–732 (GTSHAPPSDSPIGISSTSFPTPYTSSSSC). A compositionally biased stretch (low complexity) spans 718 to 732 (SSTSFPTPYTSSSSC).

It belongs to the potassium channel KCNN family. KCa2.3/KCNN3 subfamily. As to quaternary structure, homodimer. Heteromultimer with KCNN2 or KCNN1; this modulates plasma membrane expression and consequently the small conductance calcium-activated potassium channel activity. The complex is composed of 4 channel subunits each of which binds to a calmodulin subunit which regulates the channel activity through calcium-binding. Interacts with CALM1.

The protein localises to the cell membrane. It is found in the cytoplasm. The protein resides in the myofibril. It localises to the sarcomere. Its subcellular location is the z line. It catalyses the reaction K(+)(in) = K(+)(out). With respect to regulation, inhibited by bee venom neurotoxin apamin. Small conductance calcium-activated potassium channel that mediates the voltage-independent transmembrane transfer of potassium across the cell membrane through a constitutive interaction with calmodulin which binds the intracellular calcium allowing its opening. The current is characterized by a voltage-independent activation, an intracellular calcium concentration increase-dependent activation and a single-channel conductance of 10 picosiemens. Also presents an inwardly rectifying current, thus reducing its already small outward conductance of potassium ions, which is particularly the case when the membrane potential displays positive values, above + 20 mV. Activation is followed by membrane hyperpolarization. Thought to regulate neuronal excitability by contributing to the slow component of synaptic afterhyperpolarization. In Rattus norvegicus (Rat), this protein is Small conductance calcium-activated potassium channel protein 3.